A 116-amino-acid polypeptide reads, in one-letter code: Large ribosomal subunit protein uL24 (116 aa).

Belongs to the universal ribosomal protein uL24 family. Part of the 50S ribosomal subunit.

In terms of biological role, one of two assembly initiator proteins, it binds directly to the 5'-end of the 23S rRNA, where it nucleates assembly of the 50S subunit. Located at the polypeptide exit tunnel on the outside of the subunit. The protein is Large ribosomal subunit protein uL24 of Methanothrix thermoacetophila (strain DSM 6194 / JCM 14653 / NBRC 101360 / PT) (Methanosaeta thermophila).